A 318-amino-acid chain; its full sequence is Trans-prenyltransferase (318 aa).

The helical transmembrane segment at 1 to 21 (MLHLIYISIIVVLIIILISYT) threads the bilayer. Residues K85, R88, and H122 each coordinate isopentenyl diphosphate. Mg(2+) is bound by residues D129 and D135. R140 is a binding site for dimethylallyl diphosphate. R141 contributes to the isopentenyl diphosphate binding site. Residues K216, T217, and Q254 each coordinate dimethylallyl diphosphate.

It belongs to the FPP/GGPP synthase family. Asfivirus trans-prenyltransferase subfamily. Mg(2+) is required as a cofactor.

The protein localises to the host endoplasmic reticulum. The protein resides in the host membrane. It catalyses the reaction isopentenyl diphosphate + dimethylallyl diphosphate = (2E)-geranyl diphosphate + diphosphate. The enzyme catalyses isopentenyl diphosphate + (2E)-geranyl diphosphate = (2E,6E)-farnesyl diphosphate + diphosphate. The catalysed reaction is isopentenyl diphosphate + (2E,6E)-farnesyl diphosphate = (2E,6E,10E)-geranylgeranyl diphosphate + diphosphate. It carries out the reaction isopentenyl diphosphate + (2E,6E,10E)-geranylgeranyl diphosphate = (2E,6E,10E,14E)-geranylfarnesyl diphosphate + diphosphate. It functions in the pathway isoprenoid biosynthesis; farnesyl diphosphate biosynthesis; farnesyl diphosphate from geranyl diphosphate and isopentenyl diphosphate: step 1/1. It participates in isoprenoid biosynthesis; geranyl diphosphate biosynthesis; geranyl diphosphate from dimethylallyl diphosphate and isopentenyl diphosphate: step 1/1. The protein operates within isoprenoid biosynthesis; geranylgeranyl diphosphate biosynthesis; geranylgeranyl diphosphate from farnesyl diphosphate and isopentenyl diphosphate: step 1/1. In terms of biological role, trans-prenyltransferase that catalyzes the sequential condensation of isopentenyl diphosphate (IPP) with different allylic diphosphates, such as dimethylallyl diphosphate (DMAPP), geranyl diphosphate (GPP), farnesyl diphosphate (FPP) and geranylgeranyl diphosphate (GGPP), farnesyl diphosphate being the best allylic substrate. In African swine fever virus (isolate Tick/South Africa/Pretoriuskop Pr4/1996) (ASFV), this protein is Trans-prenyltransferase.